The sequence spans 384 residues: 5-amino-6-(D-ribitylamino)uracil--L-tyrosine 4-hydroxyphenyl transferase 2 (384 aa).

The 234-residue stretch at 53–286 (VSYVVNRNIY…IAISRIILHT (234 aa)) folds into the Radical SAM core domain. 3 residues coordinate [4Fe-4S] cluster: C67, C71, and C74.

This sequence belongs to the radical SAM superfamily. CofH family. Consists of two subunits, CofG and CofH. It depends on [4Fe-4S] cluster as a cofactor.

It carries out the reaction 5-amino-6-(D-ribitylamino)uracil + L-tyrosine + S-adenosyl-L-methionine = 5-amino-5-(4-hydroxybenzyl)-6-(D-ribitylimino)-5,6-dihydrouracil + 2-iminoacetate + 5'-deoxyadenosine + L-methionine + H(+). It participates in cofactor biosynthesis; coenzyme F0 biosynthesis. Its function is as follows. Catalyzes the radical-mediated synthesis of 5-amino-5-(4-hydroxybenzyl)-6-(D-ribitylimino)-5,6-dihydrouracil from 5-amino-6-(D-ribitylamino)uracil and L-tyrosine. The protein is 5-amino-6-(D-ribitylamino)uracil--L-tyrosine 4-hydroxyphenyl transferase 2 of Methanosarcina acetivorans (strain ATCC 35395 / DSM 2834 / JCM 12185 / C2A).